Consider the following 255-residue polypeptide: Triosephosphate isomerase (255 aa).

Residue 9-11 coordinates substrate; that stretch reads NWK. His-96 functions as the Electrophile in the catalytic mechanism. Residue Glu-168 is the Proton acceptor of the active site. Gly-174 and Ser-213 together coordinate substrate.

Belongs to the triosephosphate isomerase family. Homodimer.

It localises to the cytoplasm. It carries out the reaction D-glyceraldehyde 3-phosphate = dihydroxyacetone phosphate. It functions in the pathway carbohydrate biosynthesis; gluconeogenesis. Its pathway is carbohydrate degradation; glycolysis; D-glyceraldehyde 3-phosphate from glycerone phosphate: step 1/1. In terms of biological role, involved in the gluconeogenesis. Catalyzes stereospecifically the conversion of dihydroxyacetone phosphate (DHAP) to D-glyceraldehyde-3-phosphate (G3P). This Buchnera aphidicola subsp. Acyrthosiphon pisum (strain APS) (Acyrthosiphon pisum symbiotic bacterium) protein is Triosephosphate isomerase.